The primary structure comprises 298 residues: Release factor glutamine methyltransferase (298 aa).

S-adenosyl-L-methionine is bound by residues 131–135, Asp162, Trp189, and Asn205; that span reads GTGTG. A substrate-binding site is contributed by 205–208; the sequence is NPPY.

Belongs to the protein N5-glutamine methyltransferase family. PrmC subfamily.

The catalysed reaction is L-glutaminyl-[peptide chain release factor] + S-adenosyl-L-methionine = N(5)-methyl-L-glutaminyl-[peptide chain release factor] + S-adenosyl-L-homocysteine + H(+). Methylates the class 1 translation termination release factors RF1/PrfA and RF2/PrfB on the glutamine residue of the universally conserved GGQ motif. The sequence is that of Release factor glutamine methyltransferase from Pasteurella multocida (strain Pm70).